We begin with the raw amino-acid sequence, 156 residues long: Small ribosomal subunit protein uS7 (156 aa).

The protein belongs to the universal ribosomal protein uS7 family. As to quaternary structure, part of the 30S ribosomal subunit. Contacts proteins S9 and S11.

Its function is as follows. One of the primary rRNA binding proteins, it binds directly to 16S rRNA where it nucleates assembly of the head domain of the 30S subunit. Is located at the subunit interface close to the decoding center, probably blocks exit of the E-site tRNA. In Prochlorococcus marinus (strain NATL2A), this protein is Small ribosomal subunit protein uS7.